Consider the following 1193-residue polypeptide: Dynamin-like protein A (1193 aa).

A D1, associates with and fuses membranes, tethers lipsomes region spans residues 1–609 (MTDQNRKELL…AFRERVKRLE (609 aa)). The segment at 50-57 (GHYSAGKS) is G1 motif D1. The interval 76 to 78 (TSA) is G2 motif D1. Residues 141 to 144 (DTPG) form a G3 motif D1 region. The tract at residues 199–202 (NQID) is G4 motif D1. Residues 561-1193 (MPKSEIKMEQ…WKNSDNTIKM (633 aa)) form a D2, does not associate with membranes region. Positions 619-626 (GGFSSGKS) are G1 motif D2. The tract at residues 645–647 (TTA) is G2 motif D2. The tract at residues 774–777 (DTPG) is G3 motif D2. A G4 motif D2 region spans residues 837–840 (NAAD).

The protein belongs to the TRAFAC class dynamin-like GTPase superfamily. Dynamin/Fzo/YdjA family. In terms of assembly, homodimer in solution. Both D1 and D2 domains interact with YwpG, YneK interacts only with D1 while RNase Y (rny) only interacts with whole protein. Probably oligomerizes at damaged membrane sites. It depends on Mg(2+) as a cofactor.

It is found in the cell membrane. The catalysed reaction is GTP + H2O = GDP + phosphate + H(+). Its function is as follows. Mediates lipid mixing of vesicles and full mixing of their contents in the absence and presence of GTP. Tethers and mixes small vesicles better than larger ones, indicating a curvature preference. GTP slows down DynA-mediated lipid fusion, perhaps controlling its activity. Prefers phospholipid composition close to the B.subtilis membrane; requires phosphatidylglycerol for fusion has no activity on pure phosphatidylethanolamine vesicles. Regulates membrane lipid diffusion. Required to prevent membrane damage when exposed to low levels of membrane-damaging antibiotics or to bacteriophage. Probably surveys the cell membrane for stress; localizes to sites of membrane damage (treatment with nisin) and forms foci in cells treated with pore-forming compounds (CCCP). May assist membrane repair, possibly by membrane tethering and fusion. Probably functions both in early and late cell division, affects the proper formation of the FtsZ ring. Plays a non-redundant role with flottilin (floT) in membrane dynamics and cell shape. Probably able to bend membranes. Tethers liposomes and mediates their fusion; this does not require GTPase activity or the presence of GTP. Both GTPase domains (dynamin-type G) are required for GTPase activity. In terms of biological role, has intrinsic affinity for membranes and membrane distortion capability; causes tubulation and membrane distortion when expressed in a Drosophila cell line. The chain is Dynamin-like protein A from Bacillus subtilis (strain 168).